A 598-amino-acid polypeptide reads, in one-letter code: Aspartate--tRNA(Asp/Asn) ligase (598 aa).

An L-aspartate-binding site is contributed by Glu-174. An aspartate region spans residues 198-201 (QQLK). L-aspartate is bound at residue Arg-220. Residues 220–222 (RDE) and Gln-229 contribute to the ATP site. His-458 is an L-aspartate binding site. Residue Glu-492 coordinates ATP. Arg-499 lines the L-aspartate pocket. Residue 544-547 (GIDR) coordinates ATP.

It belongs to the class-II aminoacyl-tRNA synthetase family. Type 1 subfamily. As to quaternary structure, homodimer.

It is found in the cytoplasm. The catalysed reaction is tRNA(Asx) + L-aspartate + ATP = L-aspartyl-tRNA(Asx) + AMP + diphosphate. Its function is as follows. Aspartyl-tRNA synthetase with relaxed tRNA specificity since it is able to aspartylate not only its cognate tRNA(Asp) but also tRNA(Asn). Reaction proceeds in two steps: L-aspartate is first activated by ATP to form Asp-AMP and then transferred to the acceptor end of tRNA(Asp/Asn). The sequence is that of Aspartate--tRNA(Asp/Asn) ligase from Dehalococcoides mccartyi (strain ATCC BAA-2266 / KCTC 15142 / 195) (Dehalococcoides ethenogenes (strain 195)).